A 509-amino-acid chain; its full sequence is Maturase K (509 aa).

Belongs to the intron maturase 2 family. MatK subfamily.

Its subcellular location is the plastid. The protein resides in the chloroplast. Its function is as follows. Usually encoded in the trnK tRNA gene intron. Probably assists in splicing its own and other chloroplast group II introns. The protein is Maturase K of Dalea purpurea (Violet prairie clover).